A 164-amino-acid polypeptide reads, in one-letter code: Large ribosomal subunit protein uL10 (164 aa).

The protein belongs to the universal ribosomal protein uL10 family. As to quaternary structure, part of the ribosomal stalk of the 50S ribosomal subunit. The N-terminus interacts with L11 and the large rRNA to form the base of the stalk. The C-terminus forms an elongated spine to which L12 dimers bind in a sequential fashion forming a multimeric L10(L12)X complex.

In terms of biological role, forms part of the ribosomal stalk, playing a central role in the interaction of the ribosome with GTP-bound translation factors. The chain is Large ribosomal subunit protein uL10 from Pseudoalteromonas translucida (strain TAC 125).